The sequence spans 565 residues: NAD-dependent malic enzyme (565 aa).

Tyrosine 103 serves as the catalytic Proton donor. Lysine 177 (proton acceptor) is an active-site residue. A divalent metal cation-binding residues include glutamate 248, aspartate 249, and aspartate 272. Residues aspartate 272 and asparagine 419 each contribute to the NAD(+) site. At serine 445 the chain carries Phosphoserine.

The protein belongs to the malic enzymes family. The cofactor is Mg(2+). Requires Mn(2+) as cofactor.

The enzyme catalyses (S)-malate + NAD(+) = pyruvate + CO2 + NADH. The catalysed reaction is oxaloacetate + H(+) = pyruvate + CO2. This Schizosaccharomyces pombe (strain 972 / ATCC 24843) (Fission yeast) protein is NAD-dependent malic enzyme (mae2).